The chain runs to 466 residues: Ribulose bisphosphate carboxylase large chain (466 aa).

Lys-5 is subject to N6,N6,N6-trimethyllysine. The substrate site is built by Asn-114 and Thr-164. The Proton acceptor role is filled by Lys-166. Residue Lys-168 coordinates substrate. Mg(2+)-binding residues include Lys-192, Asp-194, and Glu-195. Lys-192 carries the post-translational modification N6-carboxylysine. The Proton acceptor role is filled by His-285. The substrate site is built by Arg-286, His-318, and Ser-370.

The protein belongs to the RuBisCO large chain family. Type I subfamily. In terms of assembly, heterohexadecamer of 8 large chains and 8 small chains; disulfide-linked. The disulfide link is formed within the large subunit homodimers. Requires Mg(2+) as cofactor. In terms of processing, the disulfide bond which can form in the large chain dimeric partners within the hexadecamer appears to be associated with oxidative stress and protein turnover.

The protein localises to the plastid. It localises to the chloroplast. The enzyme catalyses 2 (2R)-3-phosphoglycerate + 2 H(+) = D-ribulose 1,5-bisphosphate + CO2 + H2O. The catalysed reaction is D-ribulose 1,5-bisphosphate + O2 = 2-phosphoglycolate + (2R)-3-phosphoglycerate + 2 H(+). RuBisCO catalyzes two reactions: the carboxylation of D-ribulose 1,5-bisphosphate, the primary event in carbon dioxide fixation, as well as the oxidative fragmentation of the pentose substrate in the photorespiration process. Both reactions occur simultaneously and in competition at the same active site. This is Ribulose bisphosphate carboxylase large chain from Drosera capensis (Cape sundew).